The primary structure comprises 118 residues: MKVLISSLLLLLPLMLMSVVSSSSHTGVARGQRDQRQASGRWLREGGQECECQDWFLRAPRRTLMAAPRLTKPCPCDHFKGRMKKTRHQRHHRKSNKPSRACQQFLTRCLLESFALPL.

An N-terminal signal peptide occupies residues 1-22 (MKVLISSLLLLLPLMLMSVVSS). 2 disulfide bridges follow: Cys-74/Cys-102 and Cys-76/Cys-109.

The protein belongs to the intercrine alpha (chemokine CxC) family.

It localises to the secreted. Its function is as follows. Chemokine that acts as a chemoattractant for monocytes, macrophages and dendritic cells. Plays a role in angiogenesis and possibly in the development of tumors. Acts as an anti-inflammatory in the stomach. May play a role in the innate defense against infections. Activates the C-X-C chemokine receptor GPR35 to induce a rapid and transient rise in the level of intracellular calcium ions. The protein is C-X-C motif chemokine 17 (CXCL17) of Bos taurus (Bovine).